The chain runs to 126 residues: Fluoride-specific ion channel FluC 2 (126 aa).

Transmembrane regions (helical) follow at residues 11 to 31 (IFLI…LCEL), 34 to 54 (GQLG…MIMY), 66 to 86 (GKIA…TFAV), and 93 to 113 (FIPA…GVFF). 2 residues coordinate Na(+): Gly76 and Thr79.

The protein belongs to the fluoride channel Fluc/FEX (TC 1.A.43) family.

The protein resides in the cell membrane. The enzyme catalyses fluoride(in) = fluoride(out). With respect to regulation, na(+) is not transported, but it plays an essential structural role and its presence is essential for fluoride channel function. Fluoride-specific ion channel. Important for reducing fluoride concentration in the cell, thus reducing its toxicity. This is Fluoride-specific ion channel FluC 2 from Methanosarcina acetivorans (strain ATCC 35395 / DSM 2834 / JCM 12185 / C2A).